A 34-amino-acid chain; its full sequence is Phallacidin proprotein 1 (34 aa).

The propeptide occupies 1-10 (MSDINATRLP). The cyclopeptide (Ala-Pro) cross-link spans 11–17 (AWLVDCP). A cross-link (2'-cysteinyl-6'-hydroxytryptophan sulfoxide (Trp-Cys)) is located at residues 12–16 (WLVDC). Residues 18-34 (CVGDDVNRLLTRGESLC) constitute a propeptide that is removed on maturation.

This sequence belongs to the MSDIN fungal toxin family. Processed by the macrocyclase-peptidase enzyme POPB to yield a toxic cyclic heptapeptide. POPB first removes 10 residues from the N-terminus. Conformational trapping of the remaining peptide forces the enzyme to release this intermediate rather than proceed to macrocyclization. The enzyme rebinds the remaining peptide in a different conformation and catalyzes macrocyclization of the N-terminal 7 residues.

Functionally, major toxin that belongs to the bicyclic heptapeptides called phallotoxins. Although structurally related to amatoxins, phallotoxins have a different mode of action, which is the stabilization of F-actin. Phallotoxins are poisonous when administered parenterally, but not orally because of poor absorption. The chain is Phallacidin proprotein 1 from Amanita bisporigera (Destroying angel).